A 76-amino-acid polypeptide reads, in one-letter code: Sec-independent protein translocase protein TatA (76 aa).

Residues 1–21 (MGGLSIWHWLIVLLIVALVFG) traverse the membrane as a helical segment. The tract at residues 40-76 (KDGMKEGETPADAQQLPRTGTVDVNAKETTRSDSNKA) is disordered. The span at 64 to 76 (NAKETTRSDSNKA) shows a compositional bias: basic and acidic residues.

The protein belongs to the TatA/E family. The Tat system comprises two distinct complexes: a TatABC complex, containing multiple copies of TatA, TatB and TatC subunits, and a separate TatA complex, containing only TatA subunits. Substrates initially bind to the TatABC complex, which probably triggers association of the separate TatA complex to form the active translocon.

It is found in the cell inner membrane. Its function is as follows. Part of the twin-arginine translocation (Tat) system that transports large folded proteins containing a characteristic twin-arginine motif in their signal peptide across membranes. TatA could form the protein-conducting channel of the Tat system. The polypeptide is Sec-independent protein translocase protein TatA (Burkholderia ambifaria (strain MC40-6)).